Consider the following 440-residue polypeptide: Tubulin beta-3 chain (440 aa).

Residues glutamine 2, glutamate 60, serine 129, glycine 133, threonine 134, glycine 135, asparagine 195, and asparagine 217 each coordinate GTP. Mg(2+) is bound at residue glutamate 60. Positions 411 to 440 (SEYQQYQDATADEEGEYEDEEEEEPEHGYE) are disordered. Over residues 420 to 440 (TADEEGEYEDEEEEEPEHGYE) the composition is skewed to acidic residues.

It belongs to the tubulin family. In terms of assembly, dimer of alpha and beta chains. A typical microtubule is a hollow water-filled tube with an outer diameter of 25 nm and an inner diameter of 15 nM. Alpha-beta heterodimers associate head-to-tail to form protofilaments running lengthwise along the microtubule wall with the beta-tubulin subunit facing the microtubule plus end conferring a structural polarity. Microtubules usually have 13 protofilaments but different protofilament numbers can be found in some organisms and specialized cells. Mg(2+) is required as a cofactor.

The protein resides in the cytoplasm. It localises to the cytoskeleton. In terms of biological role, tubulin is the major constituent of microtubules, a cylinder consisting of laterally associated linear protofilaments composed of alpha- and beta-tubulin heterodimers. Microtubules grow by the addition of GTP-tubulin dimers to the microtubule end, where a stabilizing cap forms. Below the cap, tubulin dimers are in GDP-bound state, owing to GTPase activity of alpha-tubulin. This chain is Tubulin beta-3 chain (TUBB3), found in Pisum sativum (Garden pea).